The primary structure comprises 1024 residues: Beta-galactosidase (1024 aa).

Positions 103 and 202 each coordinate substrate. Residue aspartate 202 coordinates Na(+). Mg(2+) is bound by residues glutamate 417, histidine 419, and glutamate 462. Substrate contacts are provided by residues glutamate 462 and 538–541; that span reads EYAH. Glutamate 462 serves as the catalytic Proton donor. Glutamate 538 serves as the catalytic Nucleophile. Asparagine 598 is a Mg(2+) binding site. Residues phenylalanine 602 and asparagine 605 each coordinate Na(+). Substrate contacts are provided by asparagine 605 and tryptophan 1000.

The protein belongs to the glycosyl hydrolase 2 family. In terms of assembly, homotetramer. Requires Mg(2+) as cofactor. Na(+) is required as a cofactor.

It carries out the reaction Hydrolysis of terminal non-reducing beta-D-galactose residues in beta-D-galactosides.. The sequence is that of Beta-galactosidase from Escherichia coli O1:K1 / APEC.